The primary structure comprises 466 residues: Ribulose bisphosphate carboxylase large chain (466 aa).

Lys5 carries the N6,N6,N6-trimethyllysine modification. The substrate site is built by Asn114 and Thr164. Lys166 acts as the Proton acceptor in catalysis. Residue Lys168 coordinates substrate. Mg(2+)-binding residues include Lys192, Asp194, and Glu195. Lys192 carries the N6-carboxylysine modification. Catalysis depends on His285, which acts as the Proton acceptor. 3 residues coordinate substrate: Arg286, His318, and Ser370.

The protein belongs to the RuBisCO large chain family. Type I subfamily. As to quaternary structure, heterohexadecamer of 8 large chains and 8 small chains; disulfide-linked. The disulfide link is formed within the large subunit homodimers. Mg(2+) serves as cofactor. Post-translationally, the disulfide bond which can form in the large chain dimeric partners within the hexadecamer appears to be associated with oxidative stress and protein turnover.

It localises to the plastid. Its subcellular location is the chloroplast. It catalyses the reaction 2 (2R)-3-phosphoglycerate + 2 H(+) = D-ribulose 1,5-bisphosphate + CO2 + H2O. The enzyme catalyses D-ribulose 1,5-bisphosphate + O2 = 2-phosphoglycolate + (2R)-3-phosphoglycerate + 2 H(+). Its function is as follows. RuBisCO catalyzes two reactions: the carboxylation of D-ribulose 1,5-bisphosphate, the primary event in carbon dioxide fixation, as well as the oxidative fragmentation of the pentose substrate in the photorespiration process. Both reactions occur simultaneously and in competition at the same active site. In Coriaria myrtifolia (Tanner's sumac), this protein is Ribulose bisphosphate carboxylase large chain.